A 492-amino-acid chain; its full sequence is GDP-Man:Man(3)GlcNAc(2)-PP-Dol alpha-1,2-mannosyltransferase (492 aa).

The Lumenal segment spans residues 1 to 19 (MAADTGSWCVYAVLRFFYS). A helical membrane pass occupies residues 20–40 (LFFPGLMICGVLCVYLVIGLW). Topologically, residues 41–233 (VIRWHLQRKK…SRNALLSKAK (193 aa)) are cytoplasmic. An intramembrane region (helical) is located at residues 234–254 (LIYYYLFAFVYGLVGSCSDIV). Residues 255-399 (MVNSSWTLNH…IGLHTMWNEH (145 aa)) lie on the Cytoplasmic side of the membrane. Residues 400–420 (FGIGVVECMAAGTVILAHNSG) constitute an intramembrane region (helical). Residues 421–492 (GPKLDIVIPH…FLCSMEKLLT (72 aa)) lie on the Cytoplasmic side of the membrane.

This sequence belongs to the glycosyltransferase group 1 family. Glycosyltransferase 4 subfamily.

Its subcellular location is the endoplasmic reticulum membrane. The catalysed reaction is an alpha-D-Man-(1-&gt;3)-[alpha-D-Man-(1-&gt;6)]-beta-D-Man-(1-&gt;4)-beta-D-GlcNAc-(1-&gt;4)-alpha-D-GlcNAc-diphospho-di-trans,poly-cis-dolichol + 2 GDP-alpha-D-mannose = an alpha-D-Man-(1-&gt;2)-alpha-D-Man-(1-&gt;2)-alpha-D-Man-(1-&gt;3)-[alpha-D-Man-(1-&gt;6)]-beta-D-Man-(1-&gt;4)-beta-D-GlcNAc-(1-&gt;4)-alpha-D-GlcNAc-diphospho-di-trans,poly-cis-dolichol + 2 GDP + 2 H(+). It functions in the pathway protein modification; protein glycosylation. Functionally, GDP-Man:Man(3)GlcNAc(2)-PP-Dol alpha-1,2-mannosyltransferase that operates in the biosynthetic pathway of dolichol-linked oligosaccharides, the glycan precursors employed in protein asparagine (N)-glycosylation. The assembly of dolichol-linked oligosaccharides begins on the cytosolic side of the endoplasmic reticulum membrane and finishes in its lumen. The sequential addition of sugars to dolichol pyrophosphate produces dolichol-linked oligosaccharides containing fourteen sugars, including two GlcNAcs, nine mannoses and three glucoses. Once assembled, the oligosaccharide is transferred from the lipid to nascent proteins by oligosaccharyltransferases. Catalyzes, on the cytoplasmic face of the endoplasmic reticulum, the addition of the fourth and fifth mannose residues to the dolichol-linked oligosaccharide chain, to produce Man(5)GlcNAc(2)-PP-dolichol core oligosaccharide. Man(5)GlcNAc(2)-PP-dolichol is a substrate for ALG3, the following enzyme in the biosynthetic pathway. In Mus musculus (Mouse), this protein is GDP-Man:Man(3)GlcNAc(2)-PP-Dol alpha-1,2-mannosyltransferase.